The primary structure comprises 771 residues: Solute carrier family 7 member 14 (771 aa).

6 helical membrane-spanning segments follow: residues Leu-58–Val-78, Ala-83–Val-103, Ala-119–Leu-141, Tyr-187–Val-207, Val-216–Ile-236, and Trp-251–Ile-271. A glycan (N-linked (GlcNAc...) asparagine) is linked at Asn-282. A run of 4 helical transmembrane segments spans residues Ala-291–Val-311, Phe-336–Pro-356, Pro-384–Leu-404, and Leu-407–Leu-427. Residues Ser-465, Ser-468, Ser-475, and Ser-488 each carry the phosphoserine modification. The next 4 membrane-spanning stretches (helical) occupy residues Val-565–Phe-585, Trp-596–Leu-616, Met-628–Leu-648, and Trp-655–Trp-675. A glycan (N-linked (GlcNAc...) asparagine) is linked at Asn-676. Residues Ser-735–Glu-771 form a disordered region. Residues Ser-745–Lys-754 are compositionally biased toward basic residues. Phosphoserine is present on residues Ser-757 and Ser-769.

Belongs to the amino acid-polyamine-organocation (APC) superfamily. As to expression, expressed in retina, brain and spinal cord. In the retina, expressed in the inner nuclear layer and photoreceptor layer (at protein level). Expressed in liver, spleen, lung, kidney intestine and brain (at protein level).

It localises to the lysosome membrane. It catalyses the reaction 4-aminobutanoate(in) = 4-aminobutanoate(out). Its function is as follows. Imports 4-aminobutanoate (GABA) into lysosomes. May act as a GABA sensor that regulates mTORC2-dependent INS signaling and gluconeogenesis. The transport mechanism and substrate selectivity remain to be elucidated. The protein is Solute carrier family 7 member 14 of Mus musculus (Mouse).